We begin with the raw amino-acid sequence, 175 residues long: Large ribosomal subunit protein bL17m (175 aa).

The transit peptide at 1-8 (MRLSVAAA) directs the protein to the mitochondrion. The segment at 155–175 (DLRQSQEASNHSSHTAQTPGI) is disordered. The span at 161 to 175 (EASNHSSHTAQTPGI) shows a compositional bias: polar residues.

Belongs to the bacterial ribosomal protein bL17 family. In terms of assembly, component of the mitochondrial large ribosomal subunit (mt-LSU). Mature mammalian 55S mitochondrial ribosomes consist of a small (28S) and a large (39S) subunit. The 28S small subunit contains a 12S ribosomal RNA (12S mt-rRNA) and 30 different proteins. The 39S large subunit contains a 16S rRNA (16S mt-rRNA), a copy of mitochondrial valine transfer RNA (mt-tRNA(Val)), which plays an integral structural role, and 52 different proteins. As to expression, detected in adrenal gland, mammary gland and adipose tissue.

The protein localises to the mitochondrion. The protein is Large ribosomal subunit protein bL17m (MRPL17) of Homo sapiens (Human).